Reading from the N-terminus, the 334-residue chain is D-alanine--D-alanine ligase (334 aa).

In terms of domain architecture, ATP-grasp spans K111–R315. An ATP-binding site is contributed by A141 to T196. Residues D268, E282, and N284 each coordinate Mg(2+).

The protein belongs to the D-alanine--D-alanine ligase family. Mg(2+) is required as a cofactor. It depends on Mn(2+) as a cofactor.

Its subcellular location is the cytoplasm. The catalysed reaction is 2 D-alanine + ATP = D-alanyl-D-alanine + ADP + phosphate + H(+). It participates in cell wall biogenesis; peptidoglycan biosynthesis. Its function is as follows. Cell wall formation. In Herminiimonas arsenicoxydans, this protein is D-alanine--D-alanine ligase.